The following is a 312-amino-acid chain: Olfactory receptor 2L8 (312 aa).

Over 1–24 the chain is Extracellular; that stretch reads MENYNQTSTDFILLGLFPPSRIDL. N5 is a glycosylation site (N-linked (GlcNAc...) asparagine). A helical membrane pass occupies residues 25–48; the sequence is FFFILIVFIFLMALIGNLSMILLI. The Cytoplasmic segment spans residues 49–56; that stretch reads FLDTHLHT. A helical membrane pass occupies residues 57 to 78; sequence PMYFLLSQLSLIDLNYISTIVP. Residues 79–99 lie on the Extracellular side of the membrane; the sequence is KMASDFLHGNKSISFTGCGIQ. The N-linked (GlcNAc...) asparagine glycan is linked to N88. A disulfide bridge connects residues C96 and C188. The helical transmembrane segment at 100 to 119 threads the bilayer; it reads SFFFLALGGAEALLLASMAY. Residues 120 to 138 are Cytoplasmic-facing; it reads DRYIAICFPLHYLIRMSKR. Residues 139–157 traverse the membrane as a helical segment; the sequence is VCVLMITGSWIIGSINACA. The Extracellular portion of the chain corresponds to 158–194; sequence HTVYVLHIPYCRSRAINHFFCDVPAMVTLACMDTWVY. A helical transmembrane segment spans residues 195-218; it reads EGTVFLSATIFLVFPFIGISCSYG. Residues 219-235 lie on the Cytoplasmic side of the membrane; it reads QVLFAVYHMKSAEGRKK. The helical transmembrane segment at 236 to 258 threads the bilayer; that stretch reads AYLTCSTHLTVVTFYYAPFVYTY. Residues 259-271 lie on the Extracellular side of the membrane; that stretch reads LRPRSLRSPTEDK. Residues 272–291 form a helical membrane-spanning segment; it reads VLAVFYTILTPMLNPIIYSL. Over 292 to 312 the chain is Cytoplasmic; the sequence is RNKEVMGALTRVSQRICSVKM.

This sequence belongs to the G-protein coupled receptor 1 family.

Its subcellular location is the cell membrane. In terms of biological role, odorant receptor. The sequence is that of Olfactory receptor 2L8 (OR2L8) from Homo sapiens (Human).